The chain runs to 155 residues: 6,7-dimethyl-8-ribityllumazine synthase (155 aa).

5-amino-6-(D-ribitylamino)uracil is bound by residues F24, A58–E60, and A82–I84. S87–T88 serves as a coordination point for (2S)-2-hydroxy-3-oxobutyl phosphate. The active-site Proton donor is H90. A 5-amino-6-(D-ribitylamino)uracil-binding site is contributed by F115. R129 contributes to the (2S)-2-hydroxy-3-oxobutyl phosphate binding site.

It belongs to the DMRL synthase family.

The catalysed reaction is (2S)-2-hydroxy-3-oxobutyl phosphate + 5-amino-6-(D-ribitylamino)uracil = 6,7-dimethyl-8-(1-D-ribityl)lumazine + phosphate + 2 H2O + H(+). The protein operates within cofactor biosynthesis; riboflavin biosynthesis; riboflavin from 2-hydroxy-3-oxobutyl phosphate and 5-amino-6-(D-ribitylamino)uracil: step 1/2. Catalyzes the formation of 6,7-dimethyl-8-ribityllumazine by condensation of 5-amino-6-(D-ribitylamino)uracil with 3,4-dihydroxy-2-butanone 4-phosphate. This is the penultimate step in the biosynthesis of riboflavin. The polypeptide is 6,7-dimethyl-8-ribityllumazine synthase (Chlorobium phaeobacteroides (strain BS1)).